The following is a 981-amino-acid chain: MTILCSCAQQQQQQQQDTEVITSSERTTYNFNVDWKFIKSNPKQAQDINYNDATWETISCPHTFNDVDTFDDLSHGHHDGEDNQWRGTVWYRKHFKLPKDDKGKKVFIEFESVRQIADVYINGVHLGQNQTGFIPFGFDLTPHLKFGEENIIAVKVNNDRGDHFRENFPLVWNHEHWHPTHGGIYRNVFLHTMDPLHITLPLYDNLETVGTYVYAENISEKSADITVETEIQNEHAENKNITLVTQIVDNDGAVVAHSNKNVAIPSGQKMKVTTVTNIQNPQLWYTRYPYMYKVVSAIKESNKVIDTYESPLGIRNFDFNKDSGFWINGEQIKLHGWGQKPTNAWAGLGAALPDWLRDFTFKLMDEAGGNFIRWGHCAASPAEVDMGDKYGFVTLMPGVSGESEDEGETWDIRYKAFKDLIVYYRNHPSIFIWEGGNWAESEAHYKEILEAIKTFDPKGKRLMGNRRADVKNDSEGYVSIEIGTEGWEREYPDLPIIESEYNREEAPRRIWDKNSPDDNFYNHPNISKNTYKLSSEEFAVRQADHWWNKMGKKAYHSGGANWIFSDGPHGGRCPTEVTRASGEVDAVRLPKEAFYALKAMWRPEPQVHIVGHWNYEVGTKKTMYVMSNCASVKLYVNDKLVGTNSNPENGYVFKFDNVAWESGKIKAEGFIDDALKTTQTKETTGEPAALKLTSITGPEGWLADGSDVALIDVEVVDAQGRRCPLAKGRVDFTISGPAIWRGGYNSGKPNSTNNLFLDIEAGINRVAVRSVLESGTVTIMAKKPGFKDVSVTLKSLPIDFNNGLTTTLPQVYTNVLTKEPLPEHIPEMPEYIPGVKNRSELFRKFSYTGDGKAMLRTNMHWGKKAYTDLEYNYTVLPRYLNESEYVRTPNSDNRYWARDQLQFIAGKKMHIYVLHDDTVPRPEFLLRDYEDTGDNVNVVGASMSVFHRVAEEGESIIMAGNSDGDAPENCRMYTVMVKEFK.

Residue E500 is the Nucleophile of the active site. 5 residues coordinate Mg(2+): N561, W562, I563, S581, and E583.

It belongs to the glycosyl hydrolase 2 family.

It is found in the periplasm. The enzyme catalyses a beta-D-glucuronoside + H2O = D-glucuronate + an alcohol. Its function is as follows. Beta-glucuronidase involved in ulvan degradation. Ulvan is the main polysaccharide component of the Ulvales (green seaweed) cell wall. It is composed of disaccharide building blocks comprising 3-sulfated rhamnose (Rha3S) linked to D-glucuronic acid (GlcA), L-iduronic acid (IduA), or D-xylose (Xyl). Beta-glucuronidase removes GlcA side chains present on some O2 residues of Rha3S. Can remove the GlcA side chains from polymeric ulvan or from smaller oligomers. In Formosa agariphila (strain DSM 15362 / KCTC 12365 / LMG 23005 / KMM 3901 / M-2Alg 35-1), this protein is Beta-glucuronidase.